We begin with the raw amino-acid sequence, 476 residues long: Methylenetetrahydrofolate--tRNA-(uracil-5-)-methyltransferase TrmFO (476 aa).

14–19 (GGGLAG) is a binding site for FAD. A disordered region spans residues 428 to 447 (LTEPPTHGADGKKLRGPEKS). The span at 436 to 447 (ADGKKLRGPEKS) shows a compositional bias: basic and acidic residues.

This sequence belongs to the MnmG family. TrmFO subfamily. FAD is required as a cofactor.

It localises to the cytoplasm. The enzyme catalyses uridine(54) in tRNA + (6R)-5,10-methylene-5,6,7,8-tetrahydrofolate + NADH + H(+) = 5-methyluridine(54) in tRNA + (6S)-5,6,7,8-tetrahydrofolate + NAD(+). It carries out the reaction uridine(54) in tRNA + (6R)-5,10-methylene-5,6,7,8-tetrahydrofolate + NADPH + H(+) = 5-methyluridine(54) in tRNA + (6S)-5,6,7,8-tetrahydrofolate + NADP(+). Its function is as follows. Catalyzes the folate-dependent formation of 5-methyl-uridine at position 54 (M-5-U54) in all tRNAs. In Rhodopseudomonas palustris (strain BisA53), this protein is Methylenetetrahydrofolate--tRNA-(uracil-5-)-methyltransferase TrmFO.